Here is an 882-residue protein sequence, read N- to C-terminus: Putative HTH-type transcriptional regulator Mb0914c (882 aa).

An HTH luxR-type domain is found at Pro814–Gly879. The segment at residues Asn838 to Thr857 is a DNA-binding region (H-T-H motif).

The protein is Putative HTH-type transcriptional regulator Mb0914c of Mycobacterium bovis (strain ATCC BAA-935 / AF2122/97).